Reading from the N-terminus, the 505-residue chain is Chromatin assembly factor 1 subunit FAS2 homolog (505 aa).

WD repeat units lie at residues 11–50, 62–101, 110–149, 152–191, 223–268, 278–333, and 337–378; these read HEQQ…SDKK, SHSS…DGEA, FHHK…VQQK, GHLH…KSKN, FHDE…SRRD, GASK…PILI, and LHYA…LPYN. Positions 479–505 are disordered; that stretch reads VTAPPVSTKNSASSKPTKKRITPIAIN.

It belongs to the WD repeat HIR1 family. Component of the chromatin assembly factor 1 (CAF-1) complex, composed of FSM (FAS1), FAS2 and MSI1.

It is found in the nucleus. Its function is as follows. Component of the chromatin assembly factor complex (CAF-1) involved in chromatin assembly following DNA replication and DNA repair. Required for several aspects of development, including apical meristem maintenance by regulating the durations of the S- and G2-phases of the cell cycle through its chromatin assembly activity. This is Chromatin assembly factor 1 subunit FAS2 homolog (FAS2) from Oryza sativa subsp. japonica (Rice).